Here is a 555-residue protein sequence, read N- to C-terminus: Dihydroxy-acid dehydratase (555 aa).

Cysteine 46 provides a ligand contact to [2Fe-2S] cluster. Mg(2+) is bound at residue aspartate 78. Cysteine 119 is a [2Fe-2S] cluster binding site. The Mg(2+) site is built by aspartate 120 and lysine 121. At lysine 121 the chain carries N6-carboxylysine. Residue cysteine 191 participates in [2Fe-2S] cluster binding. A Mg(2+)-binding site is contributed by glutamate 442. The active-site Proton acceptor is serine 468.

Belongs to the IlvD/Edd family. In terms of assembly, homodimer. It depends on [2Fe-2S] cluster as a cofactor. Requires Mg(2+) as cofactor.

It carries out the reaction (2R)-2,3-dihydroxy-3-methylbutanoate = 3-methyl-2-oxobutanoate + H2O. The catalysed reaction is (2R,3R)-2,3-dihydroxy-3-methylpentanoate = (S)-3-methyl-2-oxopentanoate + H2O. The protein operates within amino-acid biosynthesis; L-isoleucine biosynthesis; L-isoleucine from 2-oxobutanoate: step 3/4. It functions in the pathway amino-acid biosynthesis; L-valine biosynthesis; L-valine from pyruvate: step 3/4. Its function is as follows. Functions in the biosynthesis of branched-chain amino acids. Catalyzes the dehydration of (2R,3R)-2,3-dihydroxy-3-methylpentanoate (2,3-dihydroxy-3-methylvalerate) into 2-oxo-3-methylpentanoate (2-oxo-3-methylvalerate) and of (2R)-2,3-dihydroxy-3-methylbutanoate (2,3-dihydroxyisovalerate) into 2-oxo-3-methylbutanoate (2-oxoisovalerate), the penultimate precursor to L-isoleucine and L-valine, respectively. In Thermus thermophilus (strain ATCC 27634 / DSM 579 / HB8), this protein is Dihydroxy-acid dehydratase.